We begin with the raw amino-acid sequence, 91 residues long: Small ribosomal subunit protein uS15 (91 aa).

It belongs to the universal ribosomal protein uS15 family. As to quaternary structure, part of the 30S ribosomal subunit. Forms a bridge to the 50S subunit in the 70S ribosome, contacting the 23S rRNA.

In terms of biological role, one of the primary rRNA binding proteins, it binds directly to 16S rRNA where it helps nucleate assembly of the platform of the 30S subunit by binding and bridging several RNA helices of the 16S rRNA. Functionally, forms an intersubunit bridge (bridge B4) with the 23S rRNA of the 50S subunit in the ribosome. This Rickettsia prowazekii (strain Madrid E) protein is Small ribosomal subunit protein uS15.